Consider the following 570-residue polypeptide: MDFNPVPPPRETLRAYLSKKGHVVKNWKLRLFVLKPGSSYMEYFVDETKEQQHLPQGRVPLYGTRVMEYVYNSNNNPREFCLSVETENKNWIISTGSKAQQLEWIEAIKHAIESAVETDEIKLQKHKSIEKQLQLDGKNKNKIPVLKLLLLGTGESGKSTVVKQMKILHHKGFSKEEEEFYRNLIYINLLDGMALLIHVIKENNIEIPQETLSAIKNYSSWYRVYIEKRNKNGIRNNPIGSMIPISILNNNKDNNNSNSSSLKNNSGGSSSSELDKKMTHLSLDGSTCINSNSASPNGPSSSTTTSTINTHNRSNSDGSSNNIFNVQDFGIPPIITNYISTIWSDPVVQSEVMLQAQKYHINESTQYYLNEIKRIGKPTYQPVNLDILKSRATTNGVVETDFNVNGEVIFRIVDVAGQRGERKKWINFFDDVTAIVFVAAINEYDQKLVEDNCTNRLHESLNLFDSICNDSTFPKTSIILFLNKIDLFREKLKRTSINICFPDYNGDQSYEKSSNYIKNNFLSKKKGGNGINSQNFIYFHFTCATDTKSFETVFNSVRDIIISKTLEFYC.

One can recognise a PH domain in the interval 10–113 (RETLRAYLSK…WIEAIKHAIE (104 aa)). The G-alpha domain maps to 144–570 (PVLKLLLLGT…IISKTLEFYC (427 aa)). Residues 147-160 (KLLLLGTGESGKST) are G1 motif. 152–159 (GTGESGKS) serves as a coordination point for GTP. Residue S159 participates in Mg(2+) binding. 2 stretches are compositionally biased toward low complexity: residues 254 to 272 (NNNS…SSSS) and 290 to 316 (NSNS…RSNS). Residues 254-321 (NNNSNSSSLK…NRSNSDGSSN (68 aa)) are disordered. Residues 386-394 (DILKSRATT) form a G2 motif region. GTP contacts are provided by residues 388-394 (LKSRATT), 414-418 (DVAGQ), 483-486 (NKID), and A544. T394 is a Mg(2+) binding site. Residues 410–419 (FRIVDVAGQR) form a G3 motif region. Residues 479–486 (ILFLNKID) are G4 motif. Positions 542 to 547 (TCATDT) are G5 motif.

This sequence belongs to the G-alpha family. As to quaternary structure, g proteins are composed of 3 units; alpha, beta and gamma. The alpha chain contains the guanine nucleotide binding site.

In terms of biological role, guanine nucleotide-binding proteins (G proteins) are involved as modulators or transducers in various transmembrane signaling systems. G alpha-3 plays a role in development. G alpha-3 mutants fail to aggregate. The protein is Guanine nucleotide-binding protein alpha-3 subunit (gpaC) of Dictyostelium discoideum (Social amoeba).